A 447-amino-acid polypeptide reads, in one-letter code: Na(+)-translocating NADH-quinone reductase subunit A (447 aa).

The protein belongs to the NqrA family. Composed of six subunits; NqrA, NqrB, NqrC, NqrD, NqrE and NqrF.

The catalysed reaction is a ubiquinone + n Na(+)(in) + NADH + H(+) = a ubiquinol + n Na(+)(out) + NAD(+). Functionally, NQR complex catalyzes the reduction of ubiquinone-1 to ubiquinol by two successive reactions, coupled with the transport of Na(+) ions from the cytoplasm to the periplasm. NqrA to NqrE are probably involved in the second step, the conversion of ubisemiquinone to ubiquinol. This Haemophilus influenzae (strain ATCC 51907 / DSM 11121 / KW20 / Rd) protein is Na(+)-translocating NADH-quinone reductase subunit A.